Reading from the N-terminus, the 88-residue chain is Small ribosomal subunit protein uS15 (88 aa).

The protein belongs to the universal ribosomal protein uS15 family. As to quaternary structure, part of the 30S ribosomal subunit. Forms a bridge to the 50S subunit in the 70S ribosome, contacting the 23S rRNA.

One of the primary rRNA binding proteins, it binds directly to 16S rRNA where it helps nucleate assembly of the platform of the 30S subunit by binding and bridging several RNA helices of the 16S rRNA. In terms of biological role, forms an intersubunit bridge (bridge B4) with the 23S rRNA of the 50S subunit in the ribosome. This is Small ribosomal subunit protein uS15 from Psychrobacter cryohalolentis (strain ATCC BAA-1226 / DSM 17306 / VKM B-2378 / K5).